The primary structure comprises 370 residues: tRNA pseudouridine synthase D (370 aa).

Catalysis depends on Asp77, which acts as the Nucleophile. One can recognise a TRUD domain in the interval 152 to 297; sequence GVPNYFGEQR…LEQERRPLLL (146 aa).

The protein belongs to the pseudouridine synthase TruD family.

It catalyses the reaction uridine(13) in tRNA = pseudouridine(13) in tRNA. Responsible for synthesis of pseudouridine from uracil-13 in transfer RNAs. The chain is tRNA pseudouridine synthase D from Shewanella oneidensis (strain ATCC 700550 / JCM 31522 / CIP 106686 / LMG 19005 / NCIMB 14063 / MR-1).